We begin with the raw amino-acid sequence, 129 residues long: Glycine cleavage system H protein (129 aa).

The Lipoyl-binding domain occupies 24 to 106 (LIRVGISAFA…HGAGWLLVVR (83 aa)). N6-lipoyllysine is present on Lys-65.

Belongs to the GcvH family. In terms of assembly, the glycine cleavage system is composed of four proteins: P, T, L and H. Requires (R)-lipoate as cofactor.

Functionally, the glycine cleavage system catalyzes the degradation of glycine. The H protein shuttles the methylamine group of glycine from the P protein to the T protein. In Synechococcus sp. (strain CC9902), this protein is Glycine cleavage system H protein.